Reading from the N-terminus, the 436-residue chain is Protein 60A (436 aa).

The signal sequence occupies residues 1–27; it reads MTASLVVLPSLWLILIIFTAPYTHCTQ. A propeptide spanning residues 28–317 is cleaved from the precursor; it reads SGIYIDNGKD…STLHQRKKSK (290 aa). N-linked (GlcNAc...) asparagine glycosylation is found at Asn-102, Asn-114, Asn-217, and Asn-229. Positions 293 to 322 are disordered; it reads IKSTSGHSTQKRTKRSTLHQRKKSKSEPVN. Residues 301–316 show a composition bias toward basic residues; the sequence is TQKRTKRSTLHQRKKS. Intrachain disulfides connect Cys-335–Cys-401, Cys-364–Cys-433, and Cys-368–Cys-435. Asn-377 carries N-linked (GlcNAc...) asparagine glycosylation.

The protein belongs to the TGF-beta family. Homodimer; disulfide-linked.

Its subcellular location is the secreted. The sequence is that of Protein 60A (gbb) from Drosophila virilis (Fruit fly).